Reading from the N-terminus, the 156-residue chain is ATP synthase subunit b (156 aa).

A helical transmembrane segment spans residues 7–29 (LIGQLIAFALFTWFCVKFVWPPI).

Belongs to the ATPase B chain family. In terms of assembly, F-type ATPases have 2 components, F(1) - the catalytic core - and F(0) - the membrane proton channel. F(1) has five subunits: alpha(3), beta(3), gamma(1), delta(1), epsilon(1). F(0) has three main subunits: a(1), b(2) and c(10-14). The alpha and beta chains form an alternating ring which encloses part of the gamma chain. F(1) is attached to F(0) by a central stalk formed by the gamma and epsilon chains, while a peripheral stalk is formed by the delta and b chains.

Its subcellular location is the cell inner membrane. Its function is as follows. F(1)F(0) ATP synthase produces ATP from ADP in the presence of a proton or sodium gradient. F-type ATPases consist of two structural domains, F(1) containing the extramembraneous catalytic core and F(0) containing the membrane proton channel, linked together by a central stalk and a peripheral stalk. During catalysis, ATP synthesis in the catalytic domain of F(1) is coupled via a rotary mechanism of the central stalk subunits to proton translocation. Component of the F(0) channel, it forms part of the peripheral stalk, linking F(1) to F(0). The chain is ATP synthase subunit b from Mannheimia succiniciproducens (strain KCTC 0769BP / MBEL55E).